The sequence spans 517 residues: GMP synthase [glutamine-hydrolyzing] (517 aa).

A Glutamine amidotransferase type-1 domain is found at 11–202; that stretch reads KIIVLDYGSQ…AFGVCGAQDN (192 aa). Residue cysteine 88 is the Nucleophile of the active site. Residues histidine 176 and glutamate 178 contribute to the active site. The GMPS ATP-PPase domain maps to 203–392; it reads WTMNDFIDMQ…LGMPYELVWR (190 aa). An ATP-binding site is contributed by 230–236; that stretch reads SGGVDSS.

As to quaternary structure, homodimer.

It carries out the reaction XMP + L-glutamine + ATP + H2O = GMP + L-glutamate + AMP + diphosphate + 2 H(+). Its pathway is purine metabolism; GMP biosynthesis; GMP from XMP (L-Gln route): step 1/1. Functionally, catalyzes the synthesis of GMP from XMP. This is GMP synthase [glutamine-hydrolyzing] from Latilactobacillus sakei subsp. sakei (strain 23K) (Lactobacillus sakei subsp. sakei).